The following is a 669-amino-acid chain: DNA ligase (669 aa).

Residues aspartate 31 to aspartate 35, serine 80 to leucine 81, and glutamate 112 contribute to the NAD(+) site. Lysine 114 (N6-AMP-lysine intermediate) is an active-site residue. NAD(+) is bound by residues arginine 135, glutamate 172, lysine 289, and lysine 313. Positions 407, 410, 425, and 431 each coordinate Zn(2+). The BRCT domain maps to serine 591–asparagine 669.

This sequence belongs to the NAD-dependent DNA ligase family. LigA subfamily. Mg(2+) serves as cofactor. Mn(2+) is required as a cofactor.

It carries out the reaction NAD(+) + (deoxyribonucleotide)n-3'-hydroxyl + 5'-phospho-(deoxyribonucleotide)m = (deoxyribonucleotide)n+m + AMP + beta-nicotinamide D-nucleotide.. DNA ligase that catalyzes the formation of phosphodiester linkages between 5'-phosphoryl and 3'-hydroxyl groups in double-stranded DNA using NAD as a coenzyme and as the energy source for the reaction. It is essential for DNA replication and repair of damaged DNA. This Aliivibrio salmonicida (strain LFI1238) (Vibrio salmonicida (strain LFI1238)) protein is DNA ligase.